A 237-amino-acid polypeptide reads, in one-letter code: MNAQAEEFKKYLETNGIKPKQFHKKELIFNQWDPQEYCIFLYDGITKLTSISENGTIMNLQYYKGAFVIMSGFIDTETSVGYYNLEVISEQATAYVIKINELKELLSKNLTHFFYVFQTLQKQVSYSLAKFNDFSINGKLGSICGQLLILTYVYGKETPDGIKITLDNLTMQELGYSSGIAHSSAVSRIISKLKQEKVIVYKNSCFYVQNLDYLKRYAPKLDEWFYLACPATWGKLN.

The region spanning N137–D212 is the HTH crp-type domain.

Positively regulates expression of listeriolysin, of 1-phosphadidylinositol phosphodiesterase (PI-PLC) and other virulence factors. This is Listeriolysin regulatory protein (prfA) from Listeria monocytogenes serovar 1/2a (strain ATCC BAA-679 / EGD-e).